We begin with the raw amino-acid sequence, 336 residues long: UPF0324 membrane protein BT_1919 (336 aa).

Transmembrane regions (helical) follow at residues 2–19 (LHGV…FYIG), 23–45 (FVRS…YANS), 85–107 (IGLP…GIYL), 117–134 (IALL…AAIL), 147–169 (TAVS…PFLY), 210–232 (AIIV…TYLV), 253–275 (WFAI…AQLV), and 310–332 (FVLA…KYLT).

It belongs to the UPF0324 family.

The protein localises to the cell membrane. This is UPF0324 membrane protein BT_1919 from Bacteroides thetaiotaomicron (strain ATCC 29148 / DSM 2079 / JCM 5827 / CCUG 10774 / NCTC 10582 / VPI-5482 / E50).